A 418-amino-acid polypeptide reads, in one-letter code: Tyrosine--tRNA ligase (418 aa).

Tyr38 contributes to the L-tyrosine binding site. Residues Cys43–Ser52 carry the 'HIGH' region motif. L-tyrosine is bound by residues Tyr175 and Gln179. Positions Lys235–Thr239 match the 'KMSKS' region motif. Lys238 contributes to the ATP binding site. Positions Leu348–Met413 constitute an S4 RNA-binding domain.

The protein belongs to the class-I aminoacyl-tRNA synthetase family. TyrS type 1 subfamily. In terms of assembly, homodimer.

The protein localises to the cytoplasm. The catalysed reaction is tRNA(Tyr) + L-tyrosine + ATP = L-tyrosyl-tRNA(Tyr) + AMP + diphosphate + H(+). Functionally, catalyzes the attachment of tyrosine to tRNA(Tyr) in a two-step reaction: tyrosine is first activated by ATP to form Tyr-AMP and then transferred to the acceptor end of tRNA(Tyr). The chain is Tyrosine--tRNA ligase from Ehrlichia canis (strain Jake).